Reading from the N-terminus, the 232-residue chain is Acetate--CoA ligase [ADP-forming] I subunit beta (232 aa).

Positions 27–63 (KEILKLYGIPVPEFKVARNEEEAVKFSGEIGYPVVMK) constitute an ATP-grasp domain. Position 53-64 (53-64 (SGEIGYPVVMKI)) interacts with ATP.

The protein belongs to the acetate CoA ligase beta subunit family. In terms of assembly, heterotetramer of two alpha and two beta subunits.

The protein resides in the cytoplasm. The enzyme catalyses acetate + ATP + CoA = acetyl-CoA + ADP + phosphate. Activity is dependent on magnesium. Its function is as follows. Catalyzes the reversible formation of acetate and ATP from acetyl-CoA by using ADP and phosphate. Can use other substrates such as isobutyryl-CoA, propionyl-CoA and butyryl-CoA, but not indoleacetyl-CoA, phenylacetyl-CoA or succinyl-CoA. Seems to be involved primarily in the conversion of acetyl-CoA to acetate. Participates in the degradation of branched-chain amino acids via branched-chain-acyl-CoA esters. The polypeptide is Acetate--CoA ligase [ADP-forming] I subunit beta (Pyrococcus furiosus (strain ATCC 43587 / DSM 3638 / JCM 8422 / Vc1)).